We begin with the raw amino-acid sequence, 296 residues long: Tuberculosinyl adenosine transferase (296 aa).

The protein belongs to the diterpene synthase family. Homodimer. It depends on Mg(2+) as a cofactor.

The catalysed reaction is tuberculosinyl diphosphate + adenosine + H(+) = 1-tuberculosinyladenosine + diphosphate. The enzyme catalyses tuberculosinyl diphosphate + H2O = tuberculosinol + diphosphate. It catalyses the reaction tuberculosinyl diphosphate + H2O = (13R)-edaxadiene + diphosphate. It carries out the reaction tuberculosinyl diphosphate + H2O = (13S)-edaxadiene + diphosphate. Its function is as follows. Tuberculosinyl transferase that catalyzes the condensation of adenosine and tuberculosinyl diphosphate (TbPP) to generate 1-tuberculosinyladenosine (1-TbAd), which acts as an antiacid that directly protects M.tuberculosis from acid pH and physically remodels M.tuberculosis phagolysosomes. In addition, acts as a phosphatase that catalyzes the diphosphate-removal from TbPP to produce both tuberculosinol (TOH) and isotuberculosinol (iso-TOH). This is Tuberculosinyl adenosine transferase from Mycobacterium tuberculosis (strain CDC 1551 / Oshkosh).